We begin with the raw amino-acid sequence, 113 residues long: Endoribonuclease SymE (113 aa).

Residues 29–74 (SRYPDYSRIPAITLKGQWLEAAGFATGTAVDVKVMEGCIVLTAQPA) enclose the SpoVT-AbrB domain.

Belongs to the SymE family.

Its subcellular location is the cytoplasm. In terms of biological role, involved in the degradation and recycling of damaged RNA. It is itself a target for degradation by the ATP-dependent protease Lon. The polypeptide is Endoribonuclease SymE (Shigella flexneri serotype 5b (strain 8401)).